The sequence spans 262 residues: Flap endonuclease Xni (262 aa).

Residue Asp-105 coordinates Mg(2+). The 96-residue stretch at 162–257 (ERSQFLDLMA…FRVIDSPPEK (96 aa)) folds into the 5'-3' exonuclease domain. Positions 172, 173, 181, 183, and 186 each coordinate K(+). Residues 185–190 (GIGPKS) form an interaction with DNA region.

The protein belongs to the Xni family. It depends on Mg(2+) as a cofactor. K(+) serves as cofactor.

Has flap endonuclease activity. During DNA replication, flap endonucleases cleave the 5'-overhanging flap structure that is generated by displacement synthesis when DNA polymerase encounters the 5'-end of a downstream Okazaki fragment. The polypeptide is Flap endonuclease Xni (Shewanella baltica (strain OS155 / ATCC BAA-1091)).